A 248-amino-acid chain; its full sequence is Peroxisomal membrane protein 11A (248 aa).

At 1-97 the chain is on the cytoplasmic side; it reads MATKAPEKIT…RSSRWDSNHE (97 aa). The helical transmembrane segment at 98–118 threads the bilayer; it reads LVLLIIAYGGEGLYYFVEQFI. Residues 119 to 220 lie on the Lumenal side of the membrane; sequence WLTKSGLIDA…MTIADIRDGK (102 aa). The chain crosses the membrane as a helical span at residues 221 to 241; it reads GVLSAPNVISSAGLFSAIVST. The Cytoplasmic portion of the chain corresponds to 242 to 248; sequence HKNWISC.

It belongs to the peroxin-11 family. Homooligomer. Interacts with ARC5 and FIS1B on peroxisomes. In terms of tissue distribution, expressed in developing siliques.

It is found in the peroxisome membrane. Involved in peroxisomal proliferation. Promotes peroxisomal duplication, aggregation or elongation without fission. This chain is Peroxisomal membrane protein 11A (PEX11A), found in Arabidopsis thaliana (Mouse-ear cress).